Consider the following 445-residue polypeptide: MTSLSTDFTEKLFADYEANAKYGAIENAVTHNGLLKSIETRQSEVENDFVFSIDLTKDEVSNQKASGRCWMFAALNTFRHKLISDFKLESFELSQAHTFFWDKYEKSNWFLEQIIATADQEIGSRKVKFLLDTPQQDGGQWDMVVSLFEKYGVVPKSVYPESVASSNSRELNQYLNKLLRQDAQILRDLIASGADQAAVQAKKEEFLQEIFNYLAMTLGLPPRQFDFAYRDKDDNYRSEKGITPRAFFEKYVGLKLSDYVSVINAPTADKPYGKSYTVEMLGNVVGAPSVRYINLPMDRFKELAIAQMKAGESVWFGSDVGQVSDRQKGILATNVYDFTASMDINWTQDKAGRLDYSESLMTHAMVLTGVDLDADGKPIKWKIENSWGDKVGQKGYFVASDAWMDEYTYQIVVRKDFLTAEELAAYEADPQVLAPWDPMGSLASK.

Residues Cys69, His363, and Asn385 contribute to the active site.

Belongs to the peptidase C1 family. Homohexamer.

The catalysed reaction is Inactivates bleomycin B2 (a cytotoxic glycometallopeptide) by hydrolysis of a carboxyamide bond of beta-aminoalanine, but also shows general aminopeptidase activity. The specificity varies somewhat with source, but amino acid arylamides of Met, Leu and Ala are preferred.. The polypeptide is Aminopeptidase C (pepC) (Streptococcus thermophilus).